Here is a 130-residue protein sequence, read N- to C-terminus: Small ribosomal subunit protein uS9 (130 aa).

Residues 111 to 130 form a disordered region; sequence KERRKYGLKKARKAPQFSKR.

The protein belongs to the universal ribosomal protein uS9 family.

The chain is Small ribosomal subunit protein uS9 from Thermoanaerobacter sp. (strain X514).